Consider the following 21-residue polypeptide: Alpha-fibrinogenase A1 (21 aa).

Belongs to the peptidase S1 family. Snake venom subfamily. As to quaternary structure, monomer. In terms of tissue distribution, expressed by the venom gland.

It localises to the secreted. Its activity is regulated as follows. Inhibited by PMSF, bovine aprotinin (APR), and soybean trypsin inhibitor (STI). Is not inhibited by EDTA, beta-mercaptoethanol, and high temperature (85 degrees Celsius). Functionally, snake venom serine protease that completely cleaves fibrinogen Aalpha chain (FGA), partially cleaves Bbeta chain (FGB) and has no activity on gamma chain. Is more potent that A2 and A3 alpha-fibrinogenases. Very active within 5 minutes. The sequence is that of Alpha-fibrinogenase A1 from Crotalus atrox (Western diamondback rattlesnake).